Consider the following 348-residue polypeptide: VIP36-like protein (348 aa).

The signal sequence occupies residues Met1 to Ala44. Over Gly45–Ala313 the chain is Lumenal. Residues Glu49–Leu274 form the L-type lectin-like domain. Positions 93 and 128 each coordinate a carbohydrate. Asp159, Tyr161, and Asn163 together coordinate Ca(2+). Position 161–163 (Tyr161–Asn163) interacts with a carbohydrate. The N-linked (GlcNAc...) (high mannose) asparagine glycan is linked to Asn181. His188 contributes to the a carbohydrate binding site. Position 191 (Asp191) interacts with Ca(2+). Cys200 and Cys237 are oxidised to a cystine. Residue Gly258–Leu260 coordinates a carbohydrate. A helical membrane pass occupies residues Leu314–Tyr336. Residues Asn337 to Tyr348 lie on the Cytoplasmic side of the membrane. The Endoplasmic reticulum retention signal motif lies at Arg344–Arg346.

As to expression, expressed in numerous tissues. Highest expression in skeletal muscle and kidney, intermediate levels in heart, liver and placenta, low levels in brain, thymus, spleen, small intestine and lung.

Its subcellular location is the endoplasmic reticulum membrane. It localises to the golgi apparatus membrane. May be involved in the regulation of export from the endoplasmic reticulum of a subset of glycoproteins. May function as a regulator of ERGIC-53. The chain is VIP36-like protein (LMAN2L) from Homo sapiens (Human).